The following is a 150-amino-acid chain: D-aminoacyl-tRNA deacylase (150 aa).

The short motif at 138 to 139 (GP) is the Gly-cisPro motif, important for rejection of L-amino acids element.

The protein belongs to the DTD family. In terms of assembly, homodimer.

Its subcellular location is the cytoplasm. The catalysed reaction is glycyl-tRNA(Ala) + H2O = tRNA(Ala) + glycine + H(+). The enzyme catalyses a D-aminoacyl-tRNA + H2O = a tRNA + a D-alpha-amino acid + H(+). Its function is as follows. An aminoacyl-tRNA editing enzyme that deacylates mischarged D-aminoacyl-tRNAs. Also deacylates mischarged glycyl-tRNA(Ala), protecting cells against glycine mischarging by AlaRS. Acts via tRNA-based rather than protein-based catalysis; rejects L-amino acids rather than detecting D-amino acids in the active site. By recycling D-aminoacyl-tRNA to D-amino acids and free tRNA molecules, this enzyme counteracts the toxicity associated with the formation of D-aminoacyl-tRNA entities in vivo and helps enforce protein L-homochirality. This is D-aminoacyl-tRNA deacylase from Porphyromonas gingivalis (strain ATCC 33277 / DSM 20709 / CIP 103683 / JCM 12257 / NCTC 11834 / 2561).